A 168-amino-acid chain; its full sequence is Ribosome maturation factor RimP (168 aa).

Belongs to the RimP family.

The protein localises to the cytoplasm. Functionally, required for maturation of 30S ribosomal subunits. This Bordetella bronchiseptica (strain ATCC BAA-588 / NCTC 13252 / RB50) (Alcaligenes bronchisepticus) protein is Ribosome maturation factor RimP.